Consider the following 325-residue polypeptide: ATP synthase subunit gamma, mitochondrial (325 aa).

The N-terminal 42 residues, 1 to 42, are a transit peptide targeting the mitochondrion; that stretch reads MAMAVFRREGRRLLPSIAARPIAAIRSPLSSDQEEGLLGVRS.

The protein belongs to the ATPase gamma chain family. As to quaternary structure, F-type ATPases have 2 components, CF(1) - the catalytic core - and CF(0) - the membrane proton channel. CF(1) has five subunits: alpha(3), beta(3), gamma(1), delta(1), epsilon(1). CF(0) has three main subunits: a, b and c.

It localises to the mitochondrion. The protein resides in the mitochondrion inner membrane. Its function is as follows. Mitochondrial membrane ATP synthase (F(1)F(0) ATP synthase or Complex V) produces ATP from ADP in the presence of a proton gradient across the membrane which is generated by electron transport complexes of the respiratory chain. F-type ATPases consist of two structural domains, F(1) - containing the extramembraneous catalytic core, and F(0) - containing the membrane proton channel, linked together by a central stalk and a peripheral stalk. During catalysis, ATP synthesis in the catalytic domain of F(1) is coupled via a rotary mechanism of the central stalk subunits to proton translocation. Part of the complex F(1) domain and the central stalk which is part of the complex rotary element. The gamma subunit protrudes into the catalytic domain formed of alpha(3)beta(3). Rotation of the central stalk against the surrounding alpha(3)beta(3) subunits leads to hydrolysis of ATP in three separate catalytic sites on the beta subunits. This Arabidopsis thaliana (Mouse-ear cress) protein is ATP synthase subunit gamma, mitochondrial (ATPC).